Reading from the N-terminus, the 135-residue chain is Large ribosomal subunit protein eL32 (135 aa).

Belongs to the eukaryotic ribosomal protein eL32 family.

The chain is Large ribosomal subunit protein eL32 from Methanococcus maripaludis (strain C7 / ATCC BAA-1331).